Consider the following 379-residue polypeptide: Botryococcene C-methyltransferase (379 aa).

A helical membrane pass occupies residues 17 to 37 (LLTWKGAAGLAAAVALGYIII).

The protein belongs to the class I-like SAM-binding methyltransferase superfamily. Erg6/SMT family.

It localises to the microsome membrane. The catalysed reaction is C30 botryococcene + 2 S-adenosyl-L-methionine = 3,20-dimethyl-1,2,21,22-tetradehydro-2,3,20,21-tetrahydrobotryococcene + 2 S-adenosyl-L-homocysteine + 2 H(+). Converts botryococcene to mono- and dimethyl derivatives, but not to tri- and tetramethylated products. Unable to methylate cycloartenol, zymosterol or lanosterol, but can also use squalene as substrate. Methylates both C-3 and C22 positions, but only C-3 position in monomethylated squalenes. In contrast, monomethylated botryococcene occured mainly at the C-20 position yielding showacene, but also at the C-3 position yielding isoshowacene. In Botryococcus braunii (Green alga), this protein is Botryococcene C-methyltransferase (TMT-3).